Consider the following 116-residue polypeptide: Ly-6/neurotoxin-like protein 1 (116 aa).

Residues 1–20 (MTHLLTVFLVALMGLPVAQA) form the signal peptide. Residues 21–104 (LECHVCAYNG…GFATPVTLAL (84 aa)) form the UPAR/Ly6 domain. 5 disulfide bridges follow: Cys-23/Cys-46, Cys-26/Cys-33, Cys-39/Cys-64, Cys-68/Cys-85, and Cys-86/Cys-91. Residue Asn-92 is the site of GPI-anchor amidated asparagine attachment. The propeptide at 93 to 116 (GAGFATPVTLALVPALLATFWSLL) is removed in mature form.

Interacts with nAChRs containing alpha-4:beta-2 (CHRNA4:CHRNB2) and alpha-7 (CHRNA7) subunits. Interacts with CHRNA4 probably in the endoplasmic reticulum prior to nAChR pentameric assembly. Interacts with KCNA2/Potassium voltage-gated channel subfamily A member 2. In terms of tissue distribution, expressed in neurons of multiple regions in the CNS, including the cerebral cortex, thalamus, substantia nigra, cerebellum, amygdala and hippocampus. Also expressed in kidney, heart and thymus, but at lower levels than in the brain. Expressed in the primary visual cortex (V1) and the lateral geniculate nucleus (at protein level).

The protein localises to the cell membrane. It localises to the cell projection. The protein resides in the dendrite. Its subcellular location is the endoplasmic reticulum. Acts in different tissues through interaction to nicotinic acetylcholine receptors (nAChRs). The proposed role as modulator of nAChR activity seems to be dependent on the nAChR subtype and stoichiometry, and to involve an effect on nAChR trafficking and its cell surface expression, and on single channel properties of the nAChR inserted in the plasma membrane. Modulates functional properties of nicotinic acetylcholine receptors (nAChRs) to prevent excessive excitation, and hence neurodegeneration. Enhances desensitization by increasing both the rate and extent of desensitization of alpha-4:beta-2-containing nAChRs and slowing recovery from desensitization. Promotes large amplitude ACh-evoked currents through alpha-4:beta-2 nAChRs. Is involved in regulation of the nAChR pentameric assembly in the endoplasmic reticulum. Shifts stoichiometry from high sensitivity alpha-4(2):beta-2(3) to low sensitivity alpha-4(3):beta-2(2) nAChR. In vitro modulates alpha-3:beta-4-containing nAChRs. Reduces cell surface expression of (alpha-3:beta-4)(2):beta-4 and (alpha-3:beta-4)(2):alpha-5 nAChRs suggesting an interaction with nAChR alpha-3(-):(+)beta-4 subunit interfaces and an allosteric mode. Corresponding single channel effects characterized by decreased unitary conductance, altered burst proportions and enhanced desensitization/inactivation seem to depend on nAChR alpha:alpha subunit interfaces and are greater in (alpha-3:beta-2)(2):alpha-3 when compared to (alpha-3:beta-2)(2):alpha-5 nAChRs. Prevents plasticity in the primary visual cortex late in life. This is Ly-6/neurotoxin-like protein 1 from Mus musculus (Mouse).